The primary structure comprises 201 residues: Holliday junction branch migration complex subunit RuvA (201 aa).

A domain I region spans residues Met-1–Ala-64. Positions Ser-65–Gly-143 are domain II. A flexible linker region spans residues Gly-144 to Ala-153. The tract at residues Ala-153–Lys-201 is domain III.

Belongs to the RuvA family. Homotetramer. Forms an RuvA(8)-RuvB(12)-Holliday junction (HJ) complex. HJ DNA is sandwiched between 2 RuvA tetramers; dsDNA enters through RuvA and exits via RuvB. An RuvB hexamer assembles on each DNA strand where it exits the tetramer. Each RuvB hexamer is contacted by two RuvA subunits (via domain III) on 2 adjacent RuvB subunits; this complex drives branch migration. In the full resolvosome a probable DNA-RuvA(4)-RuvB(12)-RuvC(2) complex forms which resolves the HJ.

It localises to the cytoplasm. Its function is as follows. The RuvA-RuvB-RuvC complex processes Holliday junction (HJ) DNA during genetic recombination and DNA repair, while the RuvA-RuvB complex plays an important role in the rescue of blocked DNA replication forks via replication fork reversal (RFR). RuvA specifically binds to HJ cruciform DNA, conferring on it an open structure. The RuvB hexamer acts as an ATP-dependent pump, pulling dsDNA into and through the RuvAB complex. HJ branch migration allows RuvC to scan DNA until it finds its consensus sequence, where it cleaves and resolves the cruciform DNA. The polypeptide is Holliday junction branch migration complex subunit RuvA (Thioalkalivibrio sulfidiphilus (strain HL-EbGR7)).